We begin with the raw amino-acid sequence, 930 residues long: Protein translocase subunit SecA (930 aa).

ATP is bound by residues Gln-83, Gly-101–Thr-105, and Asp-491.

It belongs to the SecA family. In terms of assembly, monomer and homodimer. Part of the essential Sec protein translocation apparatus which comprises SecA, SecYEG and auxiliary proteins SecDF. Other proteins may also be involved.

It is found in the cell inner membrane. The protein localises to the cellular thylakoid membrane. It localises to the cytoplasm. It catalyses the reaction ATP + H2O + cellular proteinSide 1 = ADP + phosphate + cellular proteinSide 2.. Functionally, part of the Sec protein translocase complex. Interacts with the SecYEG preprotein conducting channel. Has a central role in coupling the hydrolysis of ATP to the transfer of proteins into and across the cell membrane, serving as an ATP-driven molecular motor driving the stepwise translocation of polypeptide chains across the membrane. Its function is as follows. Probably participates in protein translocation into and across both the cytoplasmic and thylakoid membranes in cyanobacterial cells. This is Protein translocase subunit SecA from Nostoc sp. (strain PCC 7120 / SAG 25.82 / UTEX 2576).